The primary structure comprises 239 residues: Thymidylate kinase (239 aa).

10–17 (GINGVGKS) provides a ligand contact to ATP.

The protein belongs to the thymidylate kinase family.

The enzyme catalyses dTMP + ATP = dTDP + ADP. It functions in the pathway pyrimidine metabolism; dTTP biosynthesis. Its function is as follows. Catalyzes the conversion of dTMP to dTDP. The sequence is that of Thymidylate kinase (TMK) from African swine fever virus (isolate Warthog/Namibia/Wart80/1980) (ASFV).